A 358-amino-acid chain; its full sequence is 2-oxoisovalerate dehydrogenase subunit beta 2, mitochondrial (358 aa).

A mitochondrion-targeting transit peptide spans 1 to 16 (MAAALVRRFCRGSSFP). Residue Y119 coordinates thiamine diphosphate. G145, L147, T148, D198, and N200 together coordinate K(+).

As to quaternary structure, heterotetramer of alpha and beta chains. Thiamine diphosphate serves as cofactor. In terms of tissue distribution, expressed in the non-photosynthetic organs such as siliques, flowers and roots.

Its subcellular location is the mitochondrion matrix. The catalysed reaction is N(6)-[(R)-lipoyl]-L-lysyl-[protein] + 3-methyl-2-oxobutanoate + H(+) = N(6)-[(R)-S(8)-2-methylpropanoyldihydrolipoyl]-L-lysyl-[protein] + CO2. The branched-chain alpha-keto dehydrogenase complex catalyzes the overall conversion of alpha-keto acids to acyl-CoA and CO(2). It contains multiple copies of three enzymatic components: branched-chain alpha-keto acid decarboxylase (E1), lipoamide acyltransferase (E2) and lipoamide dehydrogenase (E3). Required during sugar starvation and acts under the control of a sugar-sensing mechanism involving Ser/Thr kinases and phosphatases. This is 2-oxoisovalerate dehydrogenase subunit beta 2, mitochondrial (DIN4) from Arabidopsis thaliana (Mouse-ear cress).